A 484-amino-acid polypeptide reads, in one-letter code: UDP-N-acetylmuramoyl-L-alanyl-D-glutamate--L-lysine ligase (484 aa).

S43 is a UDP-N-acetyl-alpha-D-muramoyl-L-alanyl-D-glutamate binding site. 119–125 is an ATP binding site; sequence GTKGKTT. Residues 161–162, S188, and R196 each bind UDP-N-acetyl-alpha-D-muramoyl-L-alanyl-D-glutamate; that span reads TT. K230 carries the N6-carboxylysine modification. Positions 405–408 match the L-lysine recognition motif motif; the sequence is DDPN.

It belongs to the MurCDEF family. MurE subfamily. In terms of processing, carboxylation is probably crucial for Mg(2+) binding and, consequently, for the gamma-phosphate positioning of ATP.

The protein resides in the cytoplasm. It catalyses the reaction UDP-N-acetyl-alpha-D-muramoyl-L-alanyl-D-glutamate + L-lysine + ATP = UDP-N-acetyl-alpha-D-muramoyl-L-alanyl-gamma-D-glutamyl-L-lysine + ADP + phosphate + H(+). The protein operates within cell wall biogenesis; peptidoglycan biosynthesis. Catalyzes the addition of L-lysine to the nucleotide precursor UDP-N-acetylmuramoyl-L-alanyl-D-glutamate (UMAG) in the biosynthesis of bacterial cell-wall peptidoglycan. This chain is UDP-N-acetylmuramoyl-L-alanyl-D-glutamate--L-lysine ligase, found in Streptococcus agalactiae serotype III (strain NEM316).